A 132-amino-acid polypeptide reads, in one-letter code: Small ribosomal subunit protein uS8 (132 aa).

This sequence belongs to the universal ribosomal protein uS8 family. In terms of assembly, part of the 30S ribosomal subunit. Contacts proteins S5 and S12.

Functionally, one of the primary rRNA binding proteins, it binds directly to 16S rRNA central domain where it helps coordinate assembly of the platform of the 30S subunit. The sequence is that of Small ribosomal subunit protein uS8 from Paenarthrobacter aurescens (strain TC1).